The following is a 238-amino-acid chain: Ribonuclease PH (238 aa).

Phosphate contacts are provided by residues Arg86 and 124–126 (GTR).

It belongs to the RNase PH family. Homohexameric ring arranged as a trimer of dimers.

It catalyses the reaction tRNA(n+1) + phosphate = tRNA(n) + a ribonucleoside 5'-diphosphate. In terms of biological role, phosphorolytic 3'-5' exoribonuclease that plays an important role in tRNA 3'-end maturation. Removes nucleotide residues following the 3'-CCA terminus of tRNAs; can also add nucleotides to the ends of RNA molecules by using nucleoside diphosphates as substrates, but this may not be physiologically important. Probably plays a role in initiation of 16S rRNA degradation (leading to ribosome degradation) during starvation. In Chromobacterium violaceum (strain ATCC 12472 / DSM 30191 / JCM 1249 / CCUG 213 / NBRC 12614 / NCIMB 9131 / NCTC 9757 / MK), this protein is Ribonuclease PH.